Consider the following 393-residue polypeptide: Peptidyl-prolyl cis-trans isomerase CYP7 (393 aa).

The 189-residue stretch at Tyr8 to Val196 folds into the PPIase cyclophilin-type domain. 3 TPR repeats span residues Ala240–Tyr273, Met292–Pro325, and Ala330–Asp363.

As to quaternary structure, interacts with RPD3 and CNS1.

It catalyses the reaction [protein]-peptidylproline (omega=180) = [protein]-peptidylproline (omega=0). In terms of biological role, PPIases accelerate the folding of proteins. It catalyzes the cis-trans isomerization of proline imidic peptide bonds in oligopeptides. Plays a major role in negative regulation of the heat shock transcription factor (HSF). This chain is Peptidyl-prolyl cis-trans isomerase CYP7 (CPR7), found in Saccharomyces cerevisiae (strain ATCC 204508 / S288c) (Baker's yeast).